A 448-amino-acid polypeptide reads, in one-letter code: Tumor necrosis factor receptor superfamily member EDAR (448 aa).

Positions 1–26 are cleaved as a signal peptide; sequence MAHVGDCTQTPWLPVLVVSLMCSARA. At 27–187 the chain is on the extracellular side; that stretch reads EYSNCGENEY…LSGQGHLATA (161 aa). 3 TNFR-Cys repeats span residues 30–71, 73–113, and 115–148; these read NCGE…DYGC, PCPA…DAEC, and PCLP…TKEC. Disulfide bonds link C31-C44, C47-C60, C50-C71, C74-C87, C93-C113, and C135-C148. N38 carries an N-linked (GlcNAc...) asparagine glycan. A helical membrane pass occupies residues 188–208; it reads LIIAMSTIFIMAIAIVLIIMF. Over 209-448 the chain is Cytoplasmic; sequence YILKTKPSAP…PPASQPHAAS (240 aa). Positions 220-297 are disordered; the sequence is CCTSHPGKSV…EEPAPDKQGS (78 aa). Positions 233 to 243 are enriched in basic and acidic residues; that stretch reads VSKDEEKKEAP. The segment covering 271–283 has biased composition (polar residues); sequence DASSENEQLLSRS. One can recognise a Death domain in the interval 358-431; the sequence is RMLSSTYNSE…DAVESLCADI (74 aa).

In terms of assembly, binds to EDARADD. Associates with TRAF1, TRAF2, TRAF3 and NIK. Detected in fetal kidney, lung, skin and cultured neonatal epidermal keratinocytes. Not detected in lymphoblast and fibroblast cell lines.

The protein localises to the membrane. Its function is as follows. Receptor for EDA isoform A1, but not for EDA isoform A2. Mediates the activation of NF-kappa-B and JNK. May promote caspase-independent cell death. This is Tumor necrosis factor receptor superfamily member EDAR (EDAR) from Homo sapiens (Human).